We begin with the raw amino-acid sequence, 307 residues long: Metapyrocatechase (307 aa).

VOC domains are found at residues 7 to 122 and 150 to 269; these read RPGH…LYAD and RFDH…VFCG. Residues His153, His214, and Glu265 each contribute to the Fe cation site.

Belongs to the extradiol ring-cleavage dioxygenase family. Homotetramer. It depends on Fe(2+) as a cofactor.

The catalysed reaction is catechol + O2 = (2Z,4E)-2-hydroxy-6-oxohexa-2,4-dienoate + H(+). The protein operates within aromatic compound metabolism; benzoate degradation via hydroxylation. The chain is Metapyrocatechase (dmpB) from Pseudomonas sp. (strain CF600).